Consider the following 572-residue polypeptide: Methionine--tRNA ligase (572 aa).

Residues 11-21 (PYINGIKHLGN) carry the 'HIGH' region motif. The Zn(2+) site is built by C143, C146, C156, and C159. The 'KMSKS' region signature appears at 346-350 (QFSTS). An ATP-binding site is contributed by T349.

This sequence belongs to the class-I aminoacyl-tRNA synthetase family. MetG type 1 subfamily. Monomer. The cofactor is Zn(2+).

The protein localises to the cytoplasm. The enzyme catalyses tRNA(Met) + L-methionine + ATP = L-methionyl-tRNA(Met) + AMP + diphosphate. Is required not only for elongation of protein synthesis but also for the initiation of all mRNA translation through initiator tRNA(fMet) aminoacylation. This chain is Methionine--tRNA ligase, found in Cereibacter sphaeroides (strain ATCC 17025 / ATH 2.4.3) (Rhodobacter sphaeroides).